A 475-amino-acid polypeptide reads, in one-letter code: DnaB-like replicative helicase (475 aa).

Residues 165–444 (YMNKARKVPF…STPTEVNEVA (280 aa)) enclose the SF4 helicase domain. ATP is bound at residue 197–204 (AGVNVGKS). The interval 456–475 (YQRNESTRAQLDALANELKF) is interaction with the helicase assembly factor.

Belongs to the helicase family. DnaB subfamily. In terms of assembly, homohexamer. The homohexamer is a trimer of asymmetric dimers. Interacts with the DNA primase; this interaction forms the active primosome complex, which is composed of 6 helicase and 1 primase subunits and expresses full helicase and primase activities. Interacts (via C-terminus) with the helicase assembly factor; this interaction brings about the rapid assembly of the helicase onto ssDNA. Part of the replicase complex that includes the DNA polymerase, the polymerase clamp, the clamp loader complex, the single-stranded DNA binding protein, the primase, the DnaB-like replicative helicase and the helicase assembly factor.

Its function is as follows. ATP-dependent DNA helicase essential for viral DNA replication and recombination. The helicase moves 5' -&gt; 3' on the lagging strand template, unwinding the DNA duplex ahead of the leading strand polymerase at the replication fork and generating ssDNA for both leading and lagging strand synthesis. Interaction with the primase allows the primase to initiate lagging strand synthesis and fully activates the helicase. Loaded by the helicase assembly factor on replication forks that begin at discrete replication origin sequences, as well as on forks that are created during recombination. This Escherichia coli (Bacteriophage T4) protein is DnaB-like replicative helicase.